The primary structure comprises 279 residues: Hydroxyethylthiazole kinase (279 aa).

Residue methionine 58 coordinates substrate. Residues lysine 134 and threonine 180 each coordinate ATP. Residue glycine 207 coordinates substrate.

It belongs to the Thz kinase family. Mg(2+) is required as a cofactor.

It carries out the reaction 5-(2-hydroxyethyl)-4-methylthiazole + ATP = 4-methyl-5-(2-phosphooxyethyl)-thiazole + ADP + H(+). The protein operates within cofactor biosynthesis; thiamine diphosphate biosynthesis; 4-methyl-5-(2-phosphoethyl)-thiazole from 5-(2-hydroxyethyl)-4-methylthiazole: step 1/1. Functionally, catalyzes the phosphorylation of the hydroxyl group of 4-methyl-5-beta-hydroxyethylthiazole (THZ). In Methanoculleus marisnigri (strain ATCC 35101 / DSM 1498 / JR1), this protein is Hydroxyethylthiazole kinase.